A 113-amino-acid polypeptide reads, in one-letter code: TAPASLYAPSALVLTIGQGESAAATSPLRAVTLTCAPKATGTHPAADAACAELRRAGGDFDALSAADGVMCTREYAPVVVTVDGVWQGRRLSYERTFANECVKNAGSASVFTF.

Intrachain disulfides connect Cys35/Cys50 and Cys71/Cys101.

The protein belongs to the protease inhibitor I16 (SSI) family. Homodimer.

The protein localises to the secreted. In terms of biological role, inhibitor of subtilisin BPN' and trypsin. This chain is Subtilisin inhibitor-like protein 2, found in Streptomyces rochei (Streptomyces parvullus).